A 347-amino-acid polypeptide reads, in one-letter code: MTAQPTILKIRRPDDWHIHLRDDRMLETVLPYTSRFFGRAIVMPNLTPPITTVASAIAYRQRILAAVPQGDDFHPLMTCYLTDALDANEIVSGFEQGVFTAAKLYPANATTNSSHGVTSVANISGILEKMQKIGMPLLIHGEVTDAAVDIFDREARFIETVLEPLRQQFPELKVVLEHITTKEAAQYVVEGNDYLAATITPQHLMFNRNHMLVGGVRPHLYCLPILKRNTHQQALREAVASGCERLFLGTDSAPHAKHRKESSCGCAGVFNAQAALSTYATVFEEMNALDKLEAFCSLNGPRFYGLPVNDSWIELYRETVTFPEEISLGDESLIPFLAGQSLNWSVR.

Histidine 17 and histidine 19 together coordinate Zn(2+). Substrate contacts are provided by residues 19–21 (HLR) and asparagine 45. Positions 103, 140, and 178 each coordinate Zn(2+). An N6-carboxylysine modification is found at lysine 103. Histidine 140 is a substrate binding site. Leucine 223 is a substrate binding site. Aspartate 251 serves as a coordination point for Zn(2+). Aspartate 251 is an active-site residue. Residues histidine 255 and alanine 267 each coordinate substrate.

The protein belongs to the metallo-dependent hydrolases superfamily. DHOase family. Class II DHOase subfamily. Homodimer. Requires Zn(2+) as cofactor.

It catalyses the reaction (S)-dihydroorotate + H2O = N-carbamoyl-L-aspartate + H(+). It participates in pyrimidine metabolism; UMP biosynthesis via de novo pathway; (S)-dihydroorotate from bicarbonate: step 3/3. Functionally, catalyzes the reversible cyclization of carbamoyl aspartate to dihydroorotate. This chain is Dihydroorotase, found in Pectobacterium carotovorum subsp. carotovorum (strain PC1).